A 310-amino-acid polypeptide reads, in one-letter code: Tryptophan 2,3-dioxygenase (310 aa).

Residues 1 to 36 (MQPPGEDAPAGCPFSGARAAHSAPAAPAAHEASHVP) form a disordered region. The span at 15 to 36 (SGARAAHSAPAAPAAHEASHVP) shows a compositional bias: low complexity. Substrate contacts are provided by residues 79–83 (FIIQH), tyrosine 141, and arginine 145. Histidine 268 lines the heme pocket. Position 282 (threonine 282) interacts with substrate.

This sequence belongs to the tryptophan 2,3-dioxygenase family. As to quaternary structure, homotetramer. Heme serves as cofactor.

It carries out the reaction L-tryptophan + O2 = N-formyl-L-kynurenine. It functions in the pathway amino-acid degradation; L-tryptophan degradation via kynurenine pathway; L-kynurenine from L-tryptophan: step 1/2. Functionally, heme-dependent dioxygenase that catalyzes the oxidative cleavage of the L-tryptophan (L-Trp) pyrrole ring and converts L-tryptophan to N-formyl-L-kynurenine. Catalyzes the oxidative cleavage of the indole moiety. The protein is Tryptophan 2,3-dioxygenase of Burkholderia lata (strain ATCC 17760 / DSM 23089 / LMG 22485 / NCIMB 9086 / R18194 / 383).